Reading from the N-terminus, the 26-residue chain is uncharacterized protein (26 aa).

Post-translationally, phosphorylated by YfhK.

Its function is as follows. Probable member of a two-component regulatory system YfhA/YfhK. This is an uncharacterized protein from Klebsiella oxytoca.